The following is a 141-amino-acid chain: Zinc finger protein 593 homolog (141 aa).

The disordered stretch occupies residues 1-32 (MGRYSGHGGTHTKKKQYKRARSTKNRAKDIDQ). A compositionally biased stretch (basic residues) spans 10–25 (THTKKKQYKRARSTKN). A C2H2-type zinc finger spans residues 60-84 (NYCIHCSKHFVTNEDLQSHIKGKPH).

This sequence belongs to the ZNF593/BUD20 C2H2-type zinc-finger protein family. Associates with pre-60S ribosomal particles; released from the pre-60S particle very early in the cytoplasm.

The protein localises to the nucleus. It is found in the cytoplasm. Involved in pre-60S ribosomal particles maturation by promoting the nuclear export of the 60S ribosome. The chain is Zinc finger protein 593 homolog from Dictyostelium discoideum (Social amoeba).